A 209-amino-acid chain; its full sequence is Ribosomal RNA large subunit methyltransferase E (209 aa).

Glycine 60, tryptophan 62, aspartate 80, aspartate 96, and aspartate 121 together coordinate S-adenosyl-L-methionine. The active-site Proton acceptor is the lysine 161. The segment covering 182-196 (VQMRKPSSSRDRSRE) has biased composition (basic and acidic residues). The interval 182–209 (VQMRKPSSSRDRSREQYLLGRGFRGRSE) is disordered.

It belongs to the class I-like SAM-binding methyltransferase superfamily. RNA methyltransferase RlmE family.

It localises to the cytoplasm. The catalysed reaction is uridine(2552) in 23S rRNA + S-adenosyl-L-methionine = 2'-O-methyluridine(2552) in 23S rRNA + S-adenosyl-L-homocysteine + H(+). In terms of biological role, specifically methylates the uridine in position 2552 of 23S rRNA at the 2'-O position of the ribose in the fully assembled 50S ribosomal subunit. The chain is Ribosomal RNA large subunit methyltransferase E from Pseudomonas fluorescens (strain ATCC BAA-477 / NRRL B-23932 / Pf-5).